A 349-amino-acid chain; its full sequence is Protein RecA (349 aa).

Residue 66–73 (GPESSGKT) coordinates ATP.

This sequence belongs to the RecA family.

Its subcellular location is the cytoplasm. In terms of biological role, can catalyze the hydrolysis of ATP in the presence of single-stranded DNA, the ATP-dependent uptake of single-stranded DNA by duplex DNA, and the ATP-dependent hybridization of homologous single-stranded DNAs. It interacts with LexA causing its activation and leading to its autocatalytic cleavage. This Psychrobacter sp. (strain PRwf-1) protein is Protein RecA.